The following is a 229-amino-acid chain: Thymidylate kinase (229 aa).

Glycine 9–serine 16 contacts ATP.

Belongs to the thymidylate kinase family.

The enzyme catalyses dTMP + ATP = dTDP + ADP. Functionally, phosphorylation of dTMP to form dTDP in both de novo and salvage pathways of dTTP synthesis. The sequence is that of Thymidylate kinase from Roseiflexus castenholzii (strain DSM 13941 / HLO8).